Reading from the N-terminus, the 411-residue chain is Imidazolonepropionase (411 aa).

2 residues coordinate Fe(3+): His75 and His77. Zn(2+) is bound by residues His75 and His77. 4-imidazolone-5-propanoate contacts are provided by Arg84, Tyr147, and His180. N-formimidoyl-L-glutamate is bound at residue Tyr147. His245 is a Fe(3+) binding site. His245 is a binding site for Zn(2+). Gln248 contributes to the 4-imidazolone-5-propanoate binding site. Asp320 contributes to the Fe(3+) binding site. Position 320 (Asp320) interacts with Zn(2+). 2 residues coordinate N-formimidoyl-L-glutamate: Asn322 and Gly324. Thr325 contacts 4-imidazolone-5-propanoate.

Belongs to the metallo-dependent hydrolases superfamily. HutI family. Zn(2+) serves as cofactor. It depends on Fe(3+) as a cofactor.

The protein resides in the cytoplasm. The enzyme catalyses 4-imidazolone-5-propanoate + H2O = N-formimidoyl-L-glutamate. Its pathway is amino-acid degradation; L-histidine degradation into L-glutamate; N-formimidoyl-L-glutamate from L-histidine: step 3/3. Functionally, catalyzes the hydrolytic cleavage of the carbon-nitrogen bond in imidazolone-5-propanoate to yield N-formimidoyl-L-glutamate. It is the third step in the universal histidine degradation pathway. This chain is Imidazolonepropionase, found in Aeromonas salmonicida (strain A449).